Reading from the N-terminus, the 410-residue chain is Cysteine desulfurase IscS (410 aa).

Pyridoxal 5'-phosphate is bound by residues 80 to 81 (AT), Asn160, Gln188, and 208 to 210 (SGH). Lys211 is subject to N6-(pyridoxal phosphate)lysine. A pyridoxal 5'-phosphate-binding site is contributed by Thr248. Cys334 serves as the catalytic Cysteine persulfide intermediate. Cys334 lines the [2Fe-2S] cluster pocket.

This sequence belongs to the class-V pyridoxal-phosphate-dependent aminotransferase family. NifS/IscS subfamily. Homodimer. Forms a heterotetramer with IscU, interacts with other sulfur acceptors. Requires pyridoxal 5'-phosphate as cofactor.

The protein resides in the cytoplasm. The enzyme catalyses (sulfur carrier)-H + L-cysteine = (sulfur carrier)-SH + L-alanine. It functions in the pathway cofactor biosynthesis; iron-sulfur cluster biosynthesis. Functionally, master enzyme that delivers sulfur to a number of partners involved in Fe-S cluster assembly, tRNA modification or cofactor biosynthesis. Catalyzes the removal of elemental sulfur atoms from cysteine to produce alanine. Functions as a sulfur delivery protein for Fe-S cluster synthesis onto IscU, an Fe-S scaffold assembly protein, as well as other S acceptor proteins. The polypeptide is Cysteine desulfurase IscS (Rickettsia peacockii (strain Rustic)).